We begin with the raw amino-acid sequence, 367 residues long: MKNVGFIGWRGMVGSVLMQRMVEERDFDAIRPVFFSTSQLGQAAPSFGGTTGTLQDAFDLEALKALDIIVTCQGGDYTNEIYPKLRESGWQGYWIDAASSLRMKDDAIIILDPVNQDVITDGLNNGIRTFVGGNCTVSLMLMSLGGLFANDLVDWVSVATYQAASGGGARHMRELLTQMGHLYGHVADELANPSSAILDIERKVTTLTRSGELPVDNFGVPLAGSLIPWIDKQLDNGQSREEWKGQAETNKILNTSSVIPVDGLCVRVGALRCHSQAFTIKLKKDVSIPTVEELLAAHNPWAKVVPNDREITMRELTPAAVTGTLTTPVGRLRKLNMGPEFLSAFTVGDQLLWGAAEPLRRMLRQLA.

NADP(+) contacts are provided by residues 10–13 (RGMV), 37–38 (TS), and Gln73. Arg102 contributes to the phosphate binding site. Residue Cys135 is the Acyl-thioester intermediate of the active site. Position 135 is an S-cysteinyl cysteine; in inhibited form (Cys135). Residue Gln162 participates in substrate binding. Residues 165–166 (SG) and Pro193 each bind NADP(+). A substrate-binding site is contributed by Glu241. Lys244 is a binding site for phosphate. Position 267 (Arg267) interacts with substrate. Catalysis depends on His274, which acts as the Proton acceptor. Residue Gln350 participates in NADP(+) binding.

The protein belongs to the aspartate-semialdehyde dehydrogenase family. In terms of assembly, homodimer.

It catalyses the reaction L-aspartate 4-semialdehyde + phosphate + NADP(+) = 4-phospho-L-aspartate + NADPH + H(+). Its pathway is amino-acid biosynthesis; L-lysine biosynthesis via DAP pathway; (S)-tetrahydrodipicolinate from L-aspartate: step 2/4. The protein operates within amino-acid biosynthesis; L-methionine biosynthesis via de novo pathway; L-homoserine from L-aspartate: step 2/3. It participates in amino-acid biosynthesis; L-threonine biosynthesis; L-threonine from L-aspartate: step 2/5. In terms of biological role, catalyzes the NADPH-dependent formation of L-aspartate-semialdehyde (L-ASA) by the reductive dephosphorylation of L-aspartyl-4-phosphate. The chain is Aspartate-semialdehyde dehydrogenase from Escherichia coli O6:H1 (strain CFT073 / ATCC 700928 / UPEC).